The chain runs to 262 residues: Phosphatidylserine decarboxylase proenzyme (262 aa).

Catalysis depends on charge relay system; for autoendoproteolytic cleavage activity residues D86, H142, and S226. S226 (schiff-base intermediate with substrate; via pyruvic acid; for decarboxylase activity) is an active-site residue. At S226 the chain carries Pyruvic acid (Ser); by autocatalysis.

The protein belongs to the phosphatidylserine decarboxylase family. PSD-B subfamily. Prokaryotic type I sub-subfamily. As to quaternary structure, heterodimer of a large membrane-associated beta subunit and a small pyruvoyl-containing alpha subunit. Pyruvate is required as a cofactor. In terms of processing, is synthesized initially as an inactive proenzyme. Formation of the active enzyme involves a self-maturation process in which the active site pyruvoyl group is generated from an internal serine residue via an autocatalytic post-translational modification. Two non-identical subunits are generated from the proenzyme in this reaction, and the pyruvate is formed at the N-terminus of the alpha chain, which is derived from the carboxyl end of the proenzyme. The autoendoproteolytic cleavage occurs by a canonical serine protease mechanism, in which the side chain hydroxyl group of the serine supplies its oxygen atom to form the C-terminus of the beta chain, while the remainder of the serine residue undergoes an oxidative deamination to produce ammonia and the pyruvoyl prosthetic group on the alpha chain. During this reaction, the Ser that is part of the protease active site of the proenzyme becomes the pyruvoyl prosthetic group, which constitutes an essential element of the active site of the mature decarboxylase.

Its subcellular location is the cell membrane. The catalysed reaction is a 1,2-diacyl-sn-glycero-3-phospho-L-serine + H(+) = a 1,2-diacyl-sn-glycero-3-phosphoethanolamine + CO2. It participates in phospholipid metabolism; phosphatidylethanolamine biosynthesis; phosphatidylethanolamine from CDP-diacylglycerol: step 2/2. Catalyzes the formation of phosphatidylethanolamine (PtdEtn) from phosphatidylserine (PtdSer). The chain is Phosphatidylserine decarboxylase proenzyme from Bacillus cereus (strain ATCC 10987 / NRS 248).